Consider the following 190-residue polypeptide: Protein GrpE (190 aa).

Basic and acidic residues predominate over residues 1 to 26; the sequence is MADKEKDAVIVDETEHVDVDSKESKK. The disordered stretch occupies residues 1 to 31; the sequence is MADKEKDAVIVDETEHVDVDSKESKKEKKTK.

It belongs to the GrpE family. Homodimer.

The protein resides in the cytoplasm. Its function is as follows. Participates actively in the response to hyperosmotic and heat shock by preventing the aggregation of stress-denatured proteins, in association with DnaK and GrpE. It is the nucleotide exchange factor for DnaK and may function as a thermosensor. Unfolded proteins bind initially to DnaJ; upon interaction with the DnaJ-bound protein, DnaK hydrolyzes its bound ATP, resulting in the formation of a stable complex. GrpE releases ADP from DnaK; ATP binding to DnaK triggers the release of the substrate protein, thus completing the reaction cycle. Several rounds of ATP-dependent interactions between DnaJ, DnaK and GrpE are required for fully efficient folding. The polypeptide is Protein GrpE (Acholeplasma laidlawii (strain PG-8A)).